Here is a 465-residue protein sequence, read N- to C-terminus: tRNA modification GTPase MnmE (465 aa).

(6S)-5-formyl-5,6,7,8-tetrahydrofolate is bound by residues Arg23, Glu81, and Lys120. In terms of domain architecture, TrmE-type G spans Gly217–Gly389. Asn227 lines the K(+) pocket. GTP-binding positions include Asn227–Ser232, Thr246–Thr252, and Asp271–Gly274. Ser231 provides a ligand contact to Mg(2+). K(+)-binding residues include Thr246, Val248, and Thr251. Thr252 is a binding site for Mg(2+). Lys465 contacts (6S)-5-formyl-5,6,7,8-tetrahydrofolate.

This sequence belongs to the TRAFAC class TrmE-Era-EngA-EngB-Septin-like GTPase superfamily. TrmE GTPase family. In terms of assembly, homodimer. Heterotetramer of two MnmE and two MnmG subunits. It depends on K(+) as a cofactor.

It localises to the cytoplasm. Its function is as follows. Exhibits a very high intrinsic GTPase hydrolysis rate. Involved in the addition of a carboxymethylaminomethyl (cmnm) group at the wobble position (U34) of certain tRNAs, forming tRNA-cmnm(5)s(2)U34. The chain is tRNA modification GTPase MnmE from Psychrobacter sp. (strain PRwf-1).